The sequence spans 412 residues: Probable tRNA sulfurtransferase (412 aa).

In terms of domain architecture, THUMP spans D58–K163. Residues M181 to L182, H206 to F207, R265, G287, and Q296 each bind ATP.

It belongs to the ThiI family.

Its subcellular location is the cytoplasm. The catalysed reaction is [ThiI sulfur-carrier protein]-S-sulfanyl-L-cysteine + a uridine in tRNA + 2 reduced [2Fe-2S]-[ferredoxin] + ATP + H(+) = [ThiI sulfur-carrier protein]-L-cysteine + a 4-thiouridine in tRNA + 2 oxidized [2Fe-2S]-[ferredoxin] + AMP + diphosphate. It carries out the reaction [ThiS sulfur-carrier protein]-C-terminal Gly-Gly-AMP + S-sulfanyl-L-cysteinyl-[cysteine desulfurase] + AH2 = [ThiS sulfur-carrier protein]-C-terminal-Gly-aminoethanethioate + L-cysteinyl-[cysteine desulfurase] + A + AMP + 2 H(+). Its pathway is cofactor biosynthesis; thiamine diphosphate biosynthesis. In terms of biological role, catalyzes the ATP-dependent transfer of a sulfur to tRNA to produce 4-thiouridine in position 8 of tRNAs, which functions as a near-UV photosensor. Also catalyzes the transfer of sulfur to the sulfur carrier protein ThiS, forming ThiS-thiocarboxylate. This is a step in the synthesis of thiazole, in the thiamine biosynthesis pathway. The sulfur is donated as persulfide by IscS. The protein is Probable tRNA sulfurtransferase of Acholeplasma laidlawii (strain PG-8A).